Consider the following 430-residue polypeptide: Adenylosuccinate synthetase (430 aa).

GTP is bound by residues 13–19 (GDEGKGK) and 41–43 (GHT). The active-site Proton acceptor is the Asp14. Asp14 and Gly41 together coordinate Mg(2+). IMP is bound by residues 14–17 (DEGK), 39–42 (NAGH), Thr130, Arg144, Gln225, Thr240, and Arg304. Residue His42 is the Proton donor of the active site. 300–306 (ATTGRAR) contacts substrate. Residues Arg306, 332–334 (KLD), and 414–416 (STG) each bind GTP.

It belongs to the adenylosuccinate synthetase family. Homodimer. Requires Mg(2+) as cofactor.

The protein resides in the cytoplasm. It carries out the reaction IMP + L-aspartate + GTP = N(6)-(1,2-dicarboxyethyl)-AMP + GDP + phosphate + 2 H(+). It participates in purine metabolism; AMP biosynthesis via de novo pathway; AMP from IMP: step 1/2. In terms of biological role, plays an important role in the de novo pathway of purine nucleotide biosynthesis. Catalyzes the first committed step in the biosynthesis of AMP from IMP. The protein is Adenylosuccinate synthetase of Pseudomonas fluorescens (strain ATCC BAA-477 / NRRL B-23932 / Pf-5).